Consider the following 300-residue polypeptide: Ribosomal protein L11 methyltransferase (300 aa).

Thr-152, Gly-173, Asp-195, and Asn-234 together coordinate S-adenosyl-L-methionine.

This sequence belongs to the methyltransferase superfamily. PrmA family.

The protein resides in the cytoplasm. It carries out the reaction L-lysyl-[protein] + 3 S-adenosyl-L-methionine = N(6),N(6),N(6)-trimethyl-L-lysyl-[protein] + 3 S-adenosyl-L-homocysteine + 3 H(+). Methylates ribosomal protein L11. The sequence is that of Ribosomal protein L11 methyltransferase from Burkholderia ambifaria (strain ATCC BAA-244 / DSM 16087 / CCUG 44356 / LMG 19182 / AMMD) (Burkholderia cepacia (strain AMMD)).